Reading from the N-terminus, the 449-residue chain is Glucose-6-phosphate isomerase (449 aa).

Catalysis depends on E291, which acts as the Proton donor. Catalysis depends on residues H312 and K426.

This sequence belongs to the GPI family.

The protein localises to the cytoplasm. It catalyses the reaction alpha-D-glucose 6-phosphate = beta-D-fructose 6-phosphate. It participates in carbohydrate biosynthesis; gluconeogenesis. The protein operates within carbohydrate degradation; glycolysis; D-glyceraldehyde 3-phosphate and glycerone phosphate from D-glucose: step 2/4. In terms of biological role, catalyzes the reversible isomerization of glucose-6-phosphate to fructose-6-phosphate. This chain is Glucose-6-phosphate isomerase, found in Streptococcus pneumoniae serotype 19F (strain G54).